Here is a 192-residue protein sequence, read N- to C-terminus: Thioredoxin-like 3-2, chloroplastic (192 aa).

A chloroplast-targeting transit peptide spans 1 to 55 (MSEIVNLSSSLRSLNPKISPLVPPYRQTSSSFSRPRNFKYHSFTDKICLAAERIR). Positions 66–191 (LQELDDSPVS…VREMIENDSI (126 aa)) constitute a Thioredoxin domain. Residues C110 and C113 each act as nucleophile in the active site. The cysteines at positions 110 and 113 are disulfide-linked.

This sequence belongs to the thioredoxin family.

Its subcellular location is the plastid. It is found in the chloroplast stroma. Functionally, probable thiol-disulfide oxidoreductase that may participate in various redox reactions. The chain is Thioredoxin-like 3-2, chloroplastic (WCRKC2) from Arabidopsis thaliana (Mouse-ear cress).